A 229-amino-acid polypeptide reads, in one-letter code: Sugar fermentation stimulation protein homolog (229 aa).

It belongs to the SfsA family.

The sequence is that of Sugar fermentation stimulation protein homolog from Carboxydothermus hydrogenoformans (strain ATCC BAA-161 / DSM 6008 / Z-2901).